We begin with the raw amino-acid sequence, 257 residues long: Ribonuclease HII (257 aa).

The RNase H type-2 domain occupies 72–257 (TYIAGIDEVG…FAPIKDMIQK (186 aa)). Asp78, Glu79, and Asp170 together coordinate a divalent metal cation.

Belongs to the RNase HII family. It depends on Mn(2+) as a cofactor. Requires Mg(2+) as cofactor.

Its subcellular location is the cytoplasm. The catalysed reaction is Endonucleolytic cleavage to 5'-phosphomonoester.. In terms of biological role, endonuclease that specifically degrades the RNA of RNA-DNA hybrids. This chain is Ribonuclease HII, found in Bacillus cereus (strain ATCC 14579 / DSM 31 / CCUG 7414 / JCM 2152 / NBRC 15305 / NCIMB 9373 / NCTC 2599 / NRRL B-3711).